The following is a 612-amino-acid chain: UvrABC system protein C (612 aa).

One can recognise a GIY-YIG domain in the interval 20–98; sequence THSGVYRMLD…IKQHRPKYNI (79 aa). The region spanning 208–243 is the UVR domain; it reads SSVLEEISANMYQASEDMEYEKAQVYRDQLVVLRKL.

This sequence belongs to the UvrC family. As to quaternary structure, interacts with UvrB in an incision complex.

The protein resides in the cytoplasm. The UvrABC repair system catalyzes the recognition and processing of DNA lesions. UvrC both incises the 5' and 3' sides of the lesion. The N-terminal half is responsible for the 3' incision and the C-terminal half is responsible for the 5' incision. The chain is UvrABC system protein C from Francisella tularensis subsp. holarctica (strain LVS).